We begin with the raw amino-acid sequence, 856 residues long: Translation initiation factor IF-2 (856 aa).

One can recognise a tr-type G domain in the interval 356–526; sequence PRAPVVTVMG…LLIADLLELK (171 aa). Residues 365 to 372 form a G1 region; the sequence is GHVDHGKT. Position 365–372 (365–372) interacts with GTP; that stretch reads GHVDHGKT. The G2 stretch occupies residues 390 to 394; it reads GITQH. Positions 412–415 are G3; it reads DTPG. Residues 412–416 and 466–469 contribute to the GTP site; these read DTPGH and NKID. The tract at residues 466-469 is G4; sequence NKID. The G5 stretch occupies residues 502–504; sequence SAK.

Belongs to the TRAFAC class translation factor GTPase superfamily. Classic translation factor GTPase family. IF-2 subfamily.

The protein localises to the cytoplasm. In terms of biological role, one of the essential components for the initiation of protein synthesis. Protects formylmethionyl-tRNA from spontaneous hydrolysis and promotes its binding to the 30S ribosomal subunits. Also involved in the hydrolysis of GTP during the formation of the 70S ribosomal complex. The sequence is that of Translation initiation factor IF-2 from Ehrlichia ruminantium (strain Gardel).